An 875-amino-acid polypeptide reads, in one-letter code: Alanine--tRNA ligase (875 aa).

Positions 563, 567, 665, and 669 each coordinate Zn(2+).

It belongs to the class-II aminoacyl-tRNA synthetase family. Zn(2+) is required as a cofactor.

It localises to the cytoplasm. The catalysed reaction is tRNA(Ala) + L-alanine + ATP = L-alanyl-tRNA(Ala) + AMP + diphosphate. Functionally, catalyzes the attachment of alanine to tRNA(Ala) in a two-step reaction: alanine is first activated by ATP to form Ala-AMP and then transferred to the acceptor end of tRNA(Ala). Also edits incorrectly charged Ser-tRNA(Ala) and Gly-tRNA(Ala) via its editing domain. The protein is Alanine--tRNA ligase of Shewanella pealeana (strain ATCC 700345 / ANG-SQ1).